A 457-amino-acid polypeptide reads, in one-letter code: UDP-N-acetylmuramoylalanine--D-glutamate ligase (457 aa).

116 to 122 (GTNGKTT) is an ATP binding site.

It belongs to the MurCDEF family.

It localises to the cytoplasm. It catalyses the reaction UDP-N-acetyl-alpha-D-muramoyl-L-alanine + D-glutamate + ATP = UDP-N-acetyl-alpha-D-muramoyl-L-alanyl-D-glutamate + ADP + phosphate + H(+). Its pathway is cell wall biogenesis; peptidoglycan biosynthesis. Its function is as follows. Cell wall formation. Catalyzes the addition of glutamate to the nucleotide precursor UDP-N-acetylmuramoyl-L-alanine (UMA). This Caldicellulosiruptor bescii (strain ATCC BAA-1888 / DSM 6725 / KCTC 15123 / Z-1320) (Anaerocellum thermophilum) protein is UDP-N-acetylmuramoylalanine--D-glutamate ligase.